The following is a 146-amino-acid chain: Large ribosomal subunit protein uL15 (146 aa).

A compositionally biased stretch (polar residues) spans 1–10 (MRLNQLSPSA). Residues 1-54 (MRLNQLSPSAGSRPDAKRAGRGAGSGLGKTAGRGHKGQHSRSGGFHKVGFEGGQ) form a disordered region. Gly residues predominate over residues 21–31 (RGAGSGLGKTA).

Belongs to the universal ribosomal protein uL15 family. In terms of assembly, part of the 50S ribosomal subunit.

Binds to the 23S rRNA. The polypeptide is Large ribosomal subunit protein uL15 (Halorhodospira halophila (strain DSM 244 / SL1) (Ectothiorhodospira halophila (strain DSM 244 / SL1))).